Reading from the N-terminus, the 170-residue chain is Urease accessory protein UreE (170 aa).

Belongs to the UreE family.

It localises to the cytoplasm. Its function is as follows. Involved in urease metallocenter assembly. Binds nickel. Probably functions as a nickel donor during metallocenter assembly. The polypeptide is Urease accessory protein UreE (Helicobacter acinonychis (strain Sheeba)).